Here is a 324-residue protein sequence, read N- to C-terminus: Proto-oncogene Mas (324 aa).

At 1 to 35 (MDQSNMTSFAEEKAMNTSSRNASLGTSHPPIPIVH) the chain is on the extracellular side. N-linked (GlcNAc...) asparagine glycans are attached at residues Asn-5, Asn-16, and Asn-21. The chain crosses the membrane as a helical span at residues 36–60 (WVIMSISPLGFVENGILLWFLCFRM). Residues 61 to 64 (RRNP) are Cytoplasmic-facing. The helical transmembrane segment at 65 to 86 (FTVYITHLSIADISLLFCIFIL) threads the bilayer. Topologically, residues 87–103 (SIDYALDYELSSGHYYT) are extracellular. Residues 104–127 (IVTLSVTFLFGYNTGLYLLTAISV) traverse the membrane as a helical segment. Over 128–148 (ERCLSVLYPIWYRCHRPKHQS) the chain is Cytoplasmic. The chain crosses the membrane as a helical span at residues 149–171 (AFVCALLWALSCLVTTMEYVMCI). Topologically, residues 172 to 184 (DSGEESHSQSDCR) are extracellular. The chain crosses the membrane as a helical span at residues 185-205 (AVIIFIAILSFLVFTPLMLVS). Topologically, residues 206 to 223 (STILVVKIRKNTWASHSS) are cytoplasmic. Residues 224–244 (KLYIVIMVTIIIFLIFAMPMR) form a helical membrane-spanning segment. Residues 245–262 (VLYLLYYEYWSTFGNLHN) are Extracellular-facing. The chain crosses the membrane as a helical span at residues 263–283 (ISLLFSTINSSANPFIYFFVG). The Cytoplasmic segment spans residues 284-324 (SSKKKRFRESLKVVLTRAFKDEMQPRRQEGNGNTVSIETVV).

This sequence belongs to the G-protein coupled receptor 1 family. Interacts with AGTR1. Interacts with FLNA (via filamin repeat 21); increases PKA-mediated phosphorylation of FLNA. In terms of tissue distribution, expressed in platelets.

The protein resides in the cell membrane. Functionally, receptor for angiotensin 1-7. Acts specifically as a functional antagonist of AGTR1 (angiotensin-2 type 1 receptor), although it up-regulates AGTR1 receptor levels. Positive regulation of AGTR1 levels occurs through activation of the G-proteins GNA11 and GNAQ, and stimulation of the protein kinase C signaling cascade. The antagonist effect on AGTR1 function is probably due to AGTR1 being physically altered by MAS1. The protein is Proto-oncogene Mas (Mas1) of Rattus norvegicus (Rat).